The sequence spans 314 residues: Ribosomal protein uL3 glutamine methyltransferase (314 aa).

Belongs to the protein N5-glutamine methyltransferase family. PrmB subfamily.

It catalyses the reaction L-glutaminyl-[ribosomal protein uL3] + S-adenosyl-L-methionine = N(5)-methyl-L-glutaminyl-[ribosomal protein uL3] + S-adenosyl-L-homocysteine + H(+). In terms of biological role, methylates large ribosomal subunit protein uL3 on a specific glutamine residue. This Vibrio cholerae serotype O1 (strain ATCC 39315 / El Tor Inaba N16961) protein is Ribosomal protein uL3 glutamine methyltransferase.